The primary structure comprises 176 residues: Probable chorismate pyruvate-lyase (176 aa).

Residues Arg70, Leu108, and Glu166 each contribute to the substrate site.

The protein belongs to the UbiC family.

It localises to the cytoplasm. The catalysed reaction is chorismate = 4-hydroxybenzoate + pyruvate. It functions in the pathway cofactor biosynthesis; ubiquinone biosynthesis. In terms of biological role, removes the pyruvyl group from chorismate, with concomitant aromatization of the ring, to provide 4-hydroxybenzoate (4HB) for the ubiquinone pathway. The polypeptide is Probable chorismate pyruvate-lyase (Dechloromonas aromatica (strain RCB)).